Here is an 806-residue protein sequence, read N- to C-terminus: ATP-dependent zinc metalloprotease FTSH 11, chloroplastic/mitochondrial (806 aa).

Residues 1-63 (MSSSTLQASL…RFRPLPCSLR (63 aa)) constitute a chloroplast and mitochondrion transit peptide. Positions 106–116 (FVGGEETKSGG) are enriched in basic and acidic residues. Residues 106-130 (FVGGEETKSGGEEAEVSNGVTEGKE) form a disordered region. A helical transmembrane segment spans residues 301–321 (LVSTILFTVAVGLVWIMGAAA). 402-409 (GAPGTGKT) is a binding site for ATP. Histidine 620 is a Zn(2+) binding site. Glutamate 621 is an active-site residue. Zn(2+)-binding residues include histidine 624 and aspartate 698.

This sequence in the N-terminal section; belongs to the AAA ATPase family. The protein in the C-terminal section; belongs to the peptidase M41 family. In terms of assembly, homooligomer. It depends on Zn(2+) as a cofactor.

It is found in the mitochondrion inner membrane. It localises to the plastid. The protein resides in the chloroplast thylakoid membrane. Its function is as follows. Probable ATP-dependent zinc metallopeptidase. Involved in the assembly and/or stability of the complexes I and V. Involved in thermotolerance but not in high light stress resistance or in the assembly/stability of the complexes I and V of the mitochondrial oxidative phosphorylation system. This is ATP-dependent zinc metalloprotease FTSH 11, chloroplastic/mitochondrial (FTSH11) from Arabidopsis thaliana (Mouse-ear cress).